A 446-amino-acid polypeptide reads, in one-letter code: Coagulation factor VII (446 aa).

The signal sequence occupies residues 1 to 24 (MVPQAHGLLLLCFLLQLQGPLGTA). Positions 25–41 (VFITQEEAHGVLHRQRR) are excised as a propeptide. The 45-residue stretch at 42–86 (ANSLLEELWPGSLERECNEEQCSFEEAREIFKSPERTKQFWIVYS) folds into the Gla domain. 10 positions are modified to 4-carboxyglutamate: Glu-47, Glu-48, Glu-55, Glu-57, Glu-60, Glu-61, Glu-66, Glu-67, Glu-70, and Glu-76. Cys-58 and Cys-63 are disulfide-bonded. The EGF-like 1; calcium-binding domain occupies 87-123 (DGDQCASNPCQNGGTCQDHLKSYVCFCLLDFEGRNCE). 10 cysteine pairs are disulfide-bonded: Cys-91/Cys-102, Cys-96/Cys-111, Cys-113/Cys-122, Cys-132/Cys-143, Cys-139/Cys-153, Cys-155/Cys-168, Cys-176/Cys-303, Cys-200/Cys-205, Cys-219/Cys-235, and Cys-351/Cys-370. Ser-93 carries O-linked (Glc...) serine; alternate glycosylation. Residue Ser-93 is glycosylated (O-linked (Xyl...) serine; alternate). Asp-104 is subject to (3R)-3-hydroxyaspartate. The 42-residue stretch at 128-169 (EQLICANENGDCDQYCRDHVGTKRTCSCHEDYTLQPDEVSCK) folds into the EGF-like 2 domain. Asn-186 carries an N-linked (GlcNAc...) asparagine glycan. In terms of domain architecture, Peptidase S1 spans 194–433 (IVGGNVCPKG…YIDWLVRHMD (240 aa)). The Charge relay system role is filled by His-234. Asn-244 carries an N-linked (GlcNAc...) asparagine glycan. The active-site Charge relay system is Asp-283. Asp-379 provides a ligand contact to substrate. Cys-381 and Cys-409 are disulfide-bonded. Ser-385 serves as the catalytic Charge relay system.

The protein belongs to the peptidase S1 family. Heterodimer of a light chain and a heavy chain linked by a disulfide bond. The vitamin K-dependent, enzymatic carboxylation of some glutamate residues allows the modified protein to bind calcium. In terms of processing, the iron and 2-oxoglutarate dependent 3-hydroxylation of aspartate and asparagine is (R) stereospecific within EGF domains. Post-translationally, can be either O-glucosylated or O-xylosylated at Ser-93 by POGLUT1. As to expression, plasma and liver.

It is found in the secreted. The catalysed reaction is Selective cleavage of Arg-|-Ile bond in factor X to form factor Xa.. Functionally, initiates the extrinsic pathway of blood coagulation. Serine protease that circulates in the blood in a zymogen form. Factor VII is converted to factor VIIa by factor Xa, factor XIIa, factor IXa, or thrombin by minor proteolysis. In the presence of tissue factor and calcium ions, factor VIIa then converts factor X to factor Xa by limited proteolysis. Factor VIIa also converts factor IX to factor IXa in the presence of tissue factor and calcium. This Mus musculus (Mouse) protein is Coagulation factor VII (F7).